The chain runs to 91 residues: Large ribosomal subunit protein uL23c (91 aa).

Belongs to the universal ribosomal protein uL23 family. As to quaternary structure, part of the 50S ribosomal subunit.

The protein resides in the plastid. It is found in the chloroplast. Binds to 23S rRNA. This chain is Large ribosomal subunit protein uL23c (rpl23), found in Chaetosphaeridium globosum (Charophycean green alga).